Here is a 976-residue protein sequence, read N- to C-terminus: Villin-2 (976 aa).

Gelsolin-like repeat units follow at residues 27 to 77 (FEAV…DEAG), 148 to 188 (IRLK…QERA), 260 to 302 (GKME…DERK), 399 to 450 (GKVK…EDQD), 531 to 571 (NKAV…EQLE), and 633 to 674 (FQVE…KEKQ). The disordered stretch occupies residues 769–917 (NSSSNRPAYS…SEIQPSGATF (149 aa)). A compositionally biased stretch (basic and acidic residues) spans 782–794 (RLNESHDGPRQRA). Composition is skewed to low complexity over residues 795–812 (EALAALSSAFNSSSSSTK), 823–841 (SQASQRAAAVAALSQVLVA), and 848–858 (DTSPTRRSTSS). At Ser890 the chain carries Phosphoserine. Over residues 908–917 (SEIQPSGATF) the composition is skewed to polar residues. An HP domain is found at 911–976 (QPSGATFTYE…DLLKKKFDLF (66 aa)).

The protein belongs to the villin/gelsolin family. Expressed in all tissues examined. Mainly detected in the root epidermis and vasculature. Expressed in the root cap.

It is found in the cytoplasm. The protein resides in the cytoskeleton. Functionally, ca(2+)-regulated actin-binding protein. Involved in actin filaments bundling. Caps the barbed end of actin filaments and is able to sever them in a calcium-dependent manner. Required for the construction of actin collars in pollen tubes. Acts redundantly with VLN5 (AC Q9LVC6) to generate thick actin filament bundles and to regulate polarized pollen tube growth. Acts redundantly with VLN3 (AC O81645) to regulate directional organ growth and in sclerenchyma development. The sequence is that of Villin-2 from Arabidopsis thaliana (Mouse-ear cress).